The chain runs to 79 residues: Succinate dehydrogenase assembly factor 1, mitochondrial (79 aa).

This sequence belongs to the complex I LYR family. SDHAF1 subfamily. Interacts with SDH2 within an SDH1-SDH2 subcomplex.

Its subcellular location is the mitochondrion matrix. In terms of biological role, plays an essential role in the assembly of succinate dehydrogenase (SDH), an enzyme complex (also referred to as respiratory complex II) that is a component of both the tricarboxylic acid (TCA) cycle and the mitochondrial electron transport chain, and which couples the oxidation of succinate to fumarate with the reduction of ubiquinone (coenzyme Q) to ubiquinol. Promotes maturation of the iron-sulfur protein subunit SDH2 of the SDH catalytic dimer, protecting it from the deleterious effects of oxidants. Acts together with SDHAF3 (SDH7). The protein is Succinate dehydrogenase assembly factor 1, mitochondrial of Saccharomyces cerevisiae (strain YJM789) (Baker's yeast).